We begin with the raw amino-acid sequence, 149 residues long: MSTQVQEQVVIINAEGQILGRMASNVVRLLKEGKKVIIVNGEKAVISGEKNRVIESYKLLLTVKTLFNPYRNGIRRPRSPINIVKRTIRGMLPKSSKGRRMLKNVKIYVGVPKEFEGRQFIKFPDSDVSRLKGKYVTVEVVSKELGWSG.

The protein belongs to the universal ribosomal protein uL13 family. In terms of assembly, part of the 50S ribosomal subunit.

In terms of biological role, this protein is one of the early assembly proteins of the 50S ribosomal subunit, although it is not seen to bind rRNA by itself. It is important during the early stages of 50S assembly. The chain is Large ribosomal subunit protein uL13 from Saccharolobus solfataricus (strain ATCC 35092 / DSM 1617 / JCM 11322 / P2) (Sulfolobus solfataricus).